Consider the following 881-residue polypeptide: Mechanosensitive ion channel protein 5 (881 aa).

2 stretches are compositionally biased toward basic and acidic residues: residues 1 to 12 (MAAVDSTDRRDF) and 48 to 59 (DGEKGKNDKKGD). The segment at 1–248 (MAAVDSTDRR…RNGFEEEEEE (248 aa)) is disordered. The span at 115–145 (ELQSNTPPRPATASNTPRRGLTTISESSSPV) shows a compositional bias: polar residues. Positions 169 to 179 (EEGRNRDEAEV) are enriched in basic and acidic residues. Position 231 is a phosphoserine (serine 231). 6 helical membrane-spanning segments follow: residues 265 to 285 (LSFW…SLVC), 309 to 329 (VLVL…IVFL), 349 to 369 (KSVQ…FLFD), 387 to 407 (VLVC…LVKV), 642 to 662 (IINV…LGIA), and 677 to 697 (VAFV…FLFV). The tract at residues 861 to 881 (PTANPTSSDRIPPSWMQQRGP) is disordered. Polar residues predominate over residues 864–881 (NPTSSDRIPPSWMQQRGP).

This sequence belongs to the MscS (TC 1.A.23) family.

It localises to the membrane. Functionally, mechanosensitive channel that opens in response to stretch forces in the membrane lipid bilayer. This is Mechanosensitive ion channel protein 5 (MSL5) from Arabidopsis thaliana (Mouse-ear cress).